The primary structure comprises 158 residues: Ribosome maturation factor RimP (158 aa).

The protein belongs to the RimP family.

The protein resides in the cytoplasm. Functionally, required for maturation of 30S ribosomal subunits. The polypeptide is Ribosome maturation factor RimP (Streptococcus suis (strain 98HAH33)).